The primary structure comprises 367 residues: WAT1-related protein At3g28050 (367 aa).

10 helical membrane passes run 10–30 (VLPVTALVIMECANVGLNTLF), 40–60 (FHVFIVYSYGLAALLLLPSLF), 73–93 (FSILYKIVLLGIIGCCSNIMG), 103–123 (TLASAISNLTPAFTFLLAVVF), 142–162 (TVVSIGGAFIVTLYNGPVVIA), 179–199 (WILGAGFLAVEYFCVPLWYIV), 211–231 (FTVVCFYSIGVSFWTALVTLF), 246–266 (IALVSIVCSGLFGSCINNTIH), 276–296 (LFVAMFKPLSIAIAVAMGVIF), and 301–321 (LYIGSLIGATVITIGFYTVMW). EamA domains lie at 25–153 (GLNT…FIVT) and 195–319 (LWYI…FYTV). The interval 338–367 (HEEANEADLDSPSGSQKAPLLESYKNDEHV) is disordered.

This sequence belongs to the drug/metabolite transporter (DMT) superfamily. Plant drug/metabolite exporter (P-DME) (TC 2.A.7.4) family.

The protein resides in the membrane. This Arabidopsis thaliana (Mouse-ear cress) protein is WAT1-related protein At3g28050.